The primary structure comprises 452 residues: Phosphoglucosamine mutase 2 (452 aa).

Serine 101 (phosphoserine intermediate) is an active-site residue. Residues serine 101, aspartate 245, aspartate 247, and aspartate 249 each coordinate Mg(2+). A Phosphoserine modification is found at serine 101.

It belongs to the phosphohexose mutase family. The cofactor is Mg(2+). In terms of processing, activated by phosphorylation.

It carries out the reaction alpha-D-glucosamine 1-phosphate = D-glucosamine 6-phosphate. Its function is as follows. Catalyzes the conversion of glucosamine-6-phosphate to glucosamine-1-phosphate. The chain is Phosphoglucosamine mutase 2 from Shewanella amazonensis (strain ATCC BAA-1098 / SB2B).